The primary structure comprises 302 residues: Nuclear egress protein 1 (302 aa).

Residues 1–17 are compositionally biased toward polar residues; sequence MPKSVSSHISLATSTGR. Residues 1-22 are disordered; it reads MPKSVSSHISLATSTGRSGPRD. The segment at 102 to 227 adopts a CCCH-type zinc-finger fold; it reads CVSLSPFGHS…CILFKTRALH (126 aa).

Belongs to the herpesviridae NEC1 protein family. In terms of assembly, forms a heterohexameric complex with NEC2. Interacts with capsid vertex specific component 2/CVC2; this interaction directs the capsid to the host inner nuclear membrane to initiate budding. Phosphorylated at serine residues in the N-terminus. This phosphorylation regulates the localization within the inner nuclear membrane.

The protein localises to the host nucleus inner membrane. Functionally, plays an essential role in virion nuclear egress, the first step of virion release from infected cell. Within the host nucleus, NEC1 interacts with the newly formed capsid through the vertexes and directs it to the inner nuclear membrane by associating with NEC2. Induces the budding of the capsid at the inner nuclear membrane as well as its envelopment into the perinuclear space. There, the NEC1/NEC2 complex promotes the fusion of the enveloped capsid with the outer nuclear membrane and the subsequent release of the viral capsid into the cytoplasm where it will reach the secondary budding sites in the host Golgi or trans-Golgi network. This chain is Nuclear egress protein 1, found in Homo sapiens (Human).